Consider the following 428-residue polypeptide: Beta-1,3-galactosyl-O-glycosyl-glycoprotein beta-1,6-N-acetylglucosaminyltransferase (428 aa).

Over 1–9 (MLRNLFRRR) the chain is Cytoplasmic. Positions 5 to 9 (LFRRR) are mediates interaction with GOLPH3 and is necessary and sufficient for localization to the Golgi. Residues 10–32 (LFSCPTKYYFMLLVLSLITFSVL) traverse the membrane as a helical; Signal-anchor for type II membrane protein segment. The segment at 33–121 (RIHQKPEFFS…EPLTKEEVGF (89 aa)) is stem region. At 33–428 (RIHQKPEFFS…RHKALENLEH (396 aa)) the chain is on the lumenal side. N58 and N95 each carry an N-linked (GlcNAc...) asparagine glycan. Intrachain disulfides connect C59–C413, C100–C172, C151–C199, and C372–C381. The catalytic stretch occupies residues 122-428 (PIAYSIVVHH…RHKALENLEH (307 aa)). UDP-N-acetyl-alpha-D-glucosamine is bound by residues 128-130 (VVH), 155-157 (DRK), and Y187. A glycoprotein contacts are provided by E243, N250, K251, R254, E320, K341, and Y358. E320 acts as the Nucleophile in catalysis. The UDP-N-acetyl-alpha-D-glucosamine site is built by R378 and K401.

It belongs to the glycosyltransferase 14 family. In terms of assembly, interacts with GOLPH3; may control GCNT1 retention in the Golgi. N-glycosylated. Expressed in kidney, liver, stomach, spleen, lung and brain.

Its subcellular location is the golgi apparatus membrane. The enzyme catalyses a 3-O-[beta-D-galactosyl-(1-&gt;3)-N-acetyl-alpha-D-galactosaminyl]-L-seryl-[protein] + UDP-N-acetyl-alpha-D-glucosamine = 3-O-{beta-D-galactosyl-(1-&gt;3)-[N-acetyl-beta-D-glucosaminyl-(1-&gt;6)]-N-acetyl-alpha-D-galactosaminyl}-L-seryl-[protein] + UDP + H(+). The catalysed reaction is a 3-O-[beta-D-galactosyl-(1-&gt;3)-N-acetyl-alpha-D-galactosaminyl]-L-threonyl-[protein] + UDP-N-acetyl-alpha-D-glucosamine = a 3-O-{beta-D-galactosyl-(1-&gt;3)-[N-acetyl-beta-D-glucosaminyl-(1-&gt;6)]-N-acetyl-alpha-D-galactosaminyl}-L-threonyl-[protein] + UDP + H(+). It carries out the reaction a globoside GalGb4Cer + UDP-N-acetyl-alpha-D-glucosamine = a globoside GlcNAc-(beta1-&gt;6)-GalGb4Cer + UDP + H(+). It catalyses the reaction a ganglioside GA1 + UDP-N-acetyl-alpha-D-glucosamine = a ganglioside beta-D-GlcNAc-(1-&gt;6)-GA1 + UDP + H(+). It functions in the pathway protein modification; protein glycosylation. The protein operates within glycolipid biosynthesis. With respect to regulation, inactivated by thiol-reactive agents. Inhibited by free UDP. Its function is as follows. Glycosyltransferase that catalyzes the transfer of an N-acetylglucosamine (GlcNAc) moiety in beta1-6 linkage from UDP-GlcNAc onto mucin-type core 1 O-glycan to form the branched mucin-type core 2 O-glycan. The catalysis is metal ion-independent and occurs with inversion of the anomeric configuration of sugar donor. Selectively involved in synthesis of mucin-type core 2 O-glycans that serve as scaffolds for the display of selectin ligand sialyl Lewis X epitope by myeloid cells, with an impact on homeostasis and recruitment to inflammatory sites. Can also act on glycolipid substrates. Transfers GlcNAc moiety to GalGb4Cer globosides in a reaction step to the synthesis of stage-specific embryonic antigen 1 (SSEA-1) determinant. Can use Galbeta1-3GalNAcalpha1-R and Galbeta1-3GalNAcbeta1-R oligosaccharide derivatives as acceptor substrates. This is Beta-1,3-galactosyl-O-glycosyl-glycoprotein beta-1,6-N-acetylglucosaminyltransferase (Gcnt1) from Mus musculus (Mouse).